The primary structure comprises 293 residues: Signal recognition particle receptor FtsY (293 aa).

Residues 93-100, 175-179, and 239-242 contribute to the GTP site; these read GVNGAGKT, DTAGR, and TKLD.

This sequence belongs to the GTP-binding SRP family. FtsY subfamily. In terms of assembly, part of the signal recognition particle protein translocation system, which is composed of SRP and FtsY. SRP is a ribonucleoprotein composed of Ffh and a 4.5S RNA molecule.

The protein localises to the cell inner membrane. Its subcellular location is the cytoplasm. The catalysed reaction is GTP + H2O = GDP + phosphate + H(+). Involved in targeting and insertion of nascent membrane proteins into the cytoplasmic membrane. Acts as a receptor for the complex formed by the signal recognition particle (SRP) and the ribosome-nascent chain (RNC). Interaction with SRP-RNC leads to the transfer of the RNC complex to the Sec translocase for insertion into the membrane, the hydrolysis of GTP by both Ffh and FtsY, and the dissociation of the SRP-FtsY complex into the individual components. The polypeptide is Signal recognition particle receptor FtsY (Helicobacter pylori (strain ATCC 700392 / 26695) (Campylobacter pylori)).